The sequence spans 247 residues: Probable transcriptional regulatory protein GTNG_2524 (247 aa).

A compositionally biased stretch (basic residues) spans 1–14; sequence MAGHSKWKNIQRRK. The interval 1–21 is disordered; the sequence is MAGHSKWKNIQRRKNAQDAKR.

Belongs to the TACO1 family.

The protein resides in the cytoplasm. In Geobacillus thermodenitrificans (strain NG80-2), this protein is Probable transcriptional regulatory protein GTNG_2524.